The sequence spans 160 residues: ATP synthase subunit b (160 aa).

Residues isoleucine 5 to tryptophan 27 form a helical membrane-spanning segment.

Belongs to the ATPase B chain family. F-type ATPases have 2 components, F(1) - the catalytic core - and F(0) - the membrane proton channel. F(1) has five subunits: alpha(3), beta(3), gamma(1), delta(1), epsilon(1). F(0) has three main subunits: a(1), b(2) and c(10-14). The alpha and beta chains form an alternating ring which encloses part of the gamma chain. F(1) is attached to F(0) by a central stalk formed by the gamma and epsilon chains, while a peripheral stalk is formed by the delta and b chains.

Its subcellular location is the cell inner membrane. In terms of biological role, f(1)F(0) ATP synthase produces ATP from ADP in the presence of a proton or sodium gradient. F-type ATPases consist of two structural domains, F(1) containing the extramembraneous catalytic core and F(0) containing the membrane proton channel, linked together by a central stalk and a peripheral stalk. During catalysis, ATP synthesis in the catalytic domain of F(1) is coupled via a rotary mechanism of the central stalk subunits to proton translocation. Its function is as follows. Component of the F(0) channel, it forms part of the peripheral stalk, linking F(1) to F(0). This Protochlamydia amoebophila (strain UWE25) protein is ATP synthase subunit b.